The primary structure comprises 257 residues: Acetylglutamate kinase (257 aa).

Residues 43 to 44 (GG), arginine 65, and asparagine 157 contribute to the substrate site. ATP contacts are provided by residues 180–185 (DVSGIL) and 208–210 (IIT).

This sequence belongs to the acetylglutamate kinase family. ArgB subfamily. In terms of assembly, homodimer.

The protein localises to the cytoplasm. The catalysed reaction is N-acetyl-L-glutamate + ATP = N-acetyl-L-glutamyl 5-phosphate + ADP. Its pathway is amino-acid biosynthesis; L-arginine biosynthesis; N(2)-acetyl-L-ornithine from L-glutamate: step 2/4. Its function is as follows. Catalyzes the ATP-dependent phosphorylation of N-acetyl-L-glutamate. The polypeptide is Acetylglutamate kinase (Salmonella schwarzengrund (strain CVM19633)).